The sequence spans 557 residues: Protein NRT1/ PTR FAMILY 5.10 (557 aa).

2 helical membrane-spanning segments follow: residues 49 to 67 (FAYYGISSNLITYLTGPLG) and 79 to 99 (AWSGTASLLPLLGAFVADSFL). Position 104 is a phosphothreonine (Thr-104). A run of 10 helical transmembrane segments spans residues 105 to 125 (ILAASALYIVGLGVLTLSAMI), 144 to 164 (VITFFSALYLVALAQGGHKPC), 186 to 206 (SFFNWWYFGMCFGTLTTLWVL), 215 to 235 (WALGFGIPCIAMVVALVVLLL), 320 to 340 (APIWLTCLVYAVVFAQSPTFF), 365 to 385 (FISLSIVIFIPIYDRVLIPIA), 401 to 421 (IGTGIFLSFLAMVVAALVEMK), 443 to 463 (VWWLVPQYVLFGITDVFAMVG), 479 to 499 (VGLALYLSIFGIGNFLSSFMI), and 526 to 546 (YFYWLLACLSFIGLASYLYVA).

It belongs to the major facilitator superfamily. Proton-dependent oligopeptide transporter (POT/PTR) (TC 2.A.17) family. In terms of tissue distribution, expressed in shoots, roots and stems. Detected in leaves, flowers and siliques.

It localises to the membrane. The polypeptide is Protein NRT1/ PTR FAMILY 5.10 (NPF5.10) (Arabidopsis thaliana (Mouse-ear cress)).